Reading from the N-terminus, the 529-residue chain is Putative E3 ubiquitin-protein ligase ARI4 (529 aa).

The segment covering 1 to 22 has biased composition (acidic residues); sequence MDDEYMSLEEEEDNCYPSEFDD. The interval 1–23 is disordered; it reads MDDEYMSLEEEEDNCYPSEFDDH. Positions 115–327 are TRIAD supradomain; the sequence is KTMKCDICME…IAGHSCGRYK (213 aa). Cys119, Cys122, Cys137, His139, Cys142, Cys145, Cys164, Cys169, Cys206, Cys212, Cys230, Cys232, Cys237, Cys240, His245, Cys250, Cys277, and Cys280 together coordinate Zn(2+). Residues 119 to 169 form an RING-type 1 zinc finger; sequence CDICMEEDLSKYAMTRMECGHRFCNDCWKEHFTVRINEGEGKRIRCMAYKC. Residues 186 to 250 form an IBR-type zinc finger; it reads EKFDRFLIES…LSESHSPCSC (65 aa). An RING-type 2; atypical zinc finger spans residues 277 to 305; sequence CPKCSKPIQKRDGCNHMTCKCGQHFCWLC. Cys290 is a catalytic residue. 6 residues coordinate Zn(2+): Cys295, Cys297, Cys302, Cys305, His313, and Cys323.

The protein belongs to the RBR family. Ariadne subfamily. Requires Zn(2+) as cofactor.

The enzyme catalyses [E2 ubiquitin-conjugating enzyme]-S-ubiquitinyl-L-cysteine + [acceptor protein]-L-lysine = [E2 ubiquitin-conjugating enzyme]-L-cysteine + [acceptor protein]-N(6)-ubiquitinyl-L-lysine.. Its pathway is protein modification; protein ubiquitination. Its function is as follows. Might act as an E3 ubiquitin-protein ligase, or as part of E3 complex, which accepts ubiquitin from specific E2 ubiquitin-conjugating enzymes and then transfers it to substrates. In Arabidopsis thaliana (Mouse-ear cress), this protein is Putative E3 ubiquitin-protein ligase ARI4 (ARI4).